Reading from the N-terminus, the 102-residue chain is Large ribosomal subunit protein bL21 (102 aa).

This sequence belongs to the bacterial ribosomal protein bL21 family. Part of the 50S ribosomal subunit. Contacts protein L20.

This protein binds to 23S rRNA in the presence of protein L20. The sequence is that of Large ribosomal subunit protein bL21 from Nocardioides sp. (strain ATCC BAA-499 / JS614).